The chain runs to 191 residues: Fe/S biogenesis protein NfuA (191 aa).

[4Fe-4S] cluster contacts are provided by C149 and C152.

Belongs to the NfuA family. In terms of assembly, homodimer. [4Fe-4S] cluster is required as a cofactor.

Involved in iron-sulfur cluster biogenesis. Binds a 4Fe-4S cluster, can transfer this cluster to apoproteins, and thereby intervenes in the maturation of Fe/S proteins. Could also act as a scaffold/chaperone for damaged Fe/S proteins. In Enterobacter sp. (strain 638), this protein is Fe/S biogenesis protein NfuA.